The chain runs to 188 residues: MAANNRSDHGSDENTRLYNPYQNYEVPINKSQYLYKLPTSPEFLFTEEALRQRRSWGENLTFYTGTAYLGGSVAGASVGVITGVKSFESGDTTKLKINRILNSSGQTGRTWGNRIGIIGLVYAGIESGIVAATDRDDVWTSVVAGLGTGAVCRAARGVRSAAVAGALGGLAAGAVVAGKQIVKRYVPI.

Helical transmembrane passes span 64–84 (TGTA…ITGV), 112–131 (GNRI…GIVA), 138–154 (VWTS…VCRA), and 161–178 (AAVA…VVAG).

It belongs to the Tim17/Tim22/Tim23 family. Homomultimer. Component of the TIM17:23 complex at least composed of TIM23, TIM17 and TIM50. The complex interacts with the TIM44 component of the PAM complex. Also part of the NADH-ubiquinone oxidoreductase complex I. Interacts with OEP163, TIM17-2, TIM21, TIM50 and MPPA2. As to expression, expressed in roots and young cotyledons. Detected in leaves and flowers.

The protein resides in the mitochondrion inner membrane. Essential component of the TIM17:23 complex, a complex that mediates the translocation of transit peptide-containing proteins across the mitochondrial inner membrane. Links the inner and outer membranes. This is Mitochondrial import inner membrane translocase subunit TIM23-2 (TIM23-2) from Arabidopsis thaliana (Mouse-ear cress).